The sequence spans 439 residues: Xylose isomerase (439 aa).

Residues H101 and D104 contribute to the active site. Residues E232, E268, H271, D296, D307, D309, and D339 each coordinate Mg(2+).

Belongs to the xylose isomerase family. Homotetramer. Mg(2+) serves as cofactor.

It is found in the cytoplasm. The enzyme catalyses alpha-D-xylose = alpha-D-xylulofuranose. The sequence is that of Xylose isomerase from Actinobacillus pleuropneumoniae serotype 5b (strain L20).